A 182-amino-acid chain; its full sequence is Transcription repressor OFP11 (182 aa).

A disordered region spans residues 62 to 94; that stretch reads PLHRRHSSENPAGVFSTNRREEEEEDETTTSVS. Positions 104 to 169 constitute an OVATE domain; the sequence is MKHIESPDPY…VSAFADTLLW (66 aa).

In terms of tissue distribution, expressed in roots, rosette and cauline leaves, shoots, stems, flower buds and siliques.

The protein resides in the nucleus. In terms of biological role, transcriptional repressor that may regulate multiple aspects of plant growth and development through the regulation of BEL1-LIKE (BLH) and KNOX TALE (KNAT) homeodomain transcription factors. The chain is Transcription repressor OFP11 (OFP11) from Arabidopsis thaliana (Mouse-ear cress).